A 104-amino-acid chain; its full sequence is Small ribosomal subunit protein uS10 (104 aa).

It belongs to the universal ribosomal protein uS10 family. In terms of assembly, part of the 30S ribosomal subunit.

Its function is as follows. Involved in the binding of tRNA to the ribosomes. The chain is Small ribosomal subunit protein uS10 from Dichelobacter nodosus (strain VCS1703A).